The following is a 268-amino-acid chain: Ubiquinone biosynthesis protein COQ4 homolog, mitochondrial (268 aa).

A mitochondrion-targeting transit peptide spans 1 to 25; the sequence is MMQRCLRLQKPLALRRGLHLAQVNS. Residues His171, Asp172, His175, and Glu187 each coordinate Zn(2+).

This sequence belongs to the COQ4 family. Component of a multi-subunit COQ enzyme complex. Zn(2+) is required as a cofactor.

The protein localises to the mitochondrion inner membrane. The enzyme catalyses a 4-hydroxy-3-methoxy-5-(all-trans-polyprenyl)benzoate + H(+) = a 2-methoxy-6-(all-trans-polyprenyl)phenol + CO2. The protein operates within cofactor biosynthesis; ubiquinone biosynthesis. Lyase that catalyzes the C1-decarboxylation of 4-hydroxy-3-methoxy-5-(all-trans-polyprenyl)benzoic acid into 2-methoxy-6-(all-trans-polyprenyl)phenol during ubiquinone biosynthesis. In Drosophila simulans (Fruit fly), this protein is Ubiquinone biosynthesis protein COQ4 homolog, mitochondrial.